Reading from the N-terminus, the 112-residue chain is Putative pterin-4-alpha-carbinolamine dehydratase (112 aa).

This sequence belongs to the pterin-4-alpha-carbinolamine dehydratase family.

It carries out the reaction (4aS,6R)-4a-hydroxy-L-erythro-5,6,7,8-tetrahydrobiopterin = (6R)-L-erythro-6,7-dihydrobiopterin + H2O. This is Putative pterin-4-alpha-carbinolamine dehydratase from Shewanella woodyi (strain ATCC 51908 / MS32).